A 367-amino-acid polypeptide reads, in one-letter code: DNA replication and repair protein RecF (367 aa).

30 to 37 (GANGSGKT) lines the ATP pocket.

It belongs to the RecF family.

The protein resides in the cytoplasm. In terms of biological role, the RecF protein is involved in DNA metabolism; it is required for DNA replication and normal SOS inducibility. RecF binds preferentially to single-stranded, linear DNA. It also seems to bind ATP. This Pseudomonas putida (strain W619) protein is DNA replication and repair protein RecF.